Consider the following 666-residue polypeptide: DNA ligase (666 aa).

Residues 34-38, 83-84, and glutamate 114 each bind NAD(+); these read DAEYD and SL. The active-site N6-AMP-lysine intermediate is lysine 116. Residues arginine 137, glutamate 171, lysine 286, and lysine 310 each coordinate NAD(+). Positions 404, 407, 422, and 427 each coordinate Zn(2+). One can recognise a BRCT domain in the interval 588–666; sequence NTESTISEKS…EEFFAILKGE (79 aa).

This sequence belongs to the NAD-dependent DNA ligase family. LigA subfamily. It depends on Mg(2+) as a cofactor. The cofactor is Mn(2+).

The catalysed reaction is NAD(+) + (deoxyribonucleotide)n-3'-hydroxyl + 5'-phospho-(deoxyribonucleotide)m = (deoxyribonucleotide)n+m + AMP + beta-nicotinamide D-nucleotide.. Functionally, DNA ligase that catalyzes the formation of phosphodiester linkages between 5'-phosphoryl and 3'-hydroxyl groups in double-stranded DNA using NAD as a coenzyme and as the energy source for the reaction. It is essential for DNA replication and repair of damaged DNA. This chain is DNA ligase, found in Mesoplasma florum (strain ATCC 33453 / NBRC 100688 / NCTC 11704 / L1) (Acholeplasma florum).